A 101-amino-acid chain; its full sequence is Small ribosomal subunit protein bS18c (101 aa).

The span at 1–19 shows a compositional bias: basic residues; sequence MNKSKRPFTKSKRSFRRRL. The disordered stretch occupies residues 1 to 23; the sequence is MNKSKRPFTKSKRSFRRRLPPIQ.

Belongs to the bacterial ribosomal protein bS18 family. In terms of assembly, part of the 30S ribosomal subunit.

The protein resides in the plastid. Its subcellular location is the chloroplast. The polypeptide is Small ribosomal subunit protein bS18c (Draba nemorosa (Woodland whitlowgrass)).